The primary structure comprises 237 residues: Aliphatic sulfonates import ATP-binding protein SsuB 1 (237 aa).

The region spanning 5–221 (LMNIRVDRKA…PRDRRDPLLA (217 aa)) is the ABC transporter domain. ATP is bound at residue 38–45 (GPSGCGKS).

Belongs to the ABC transporter superfamily. Aliphatic sulfonates importer (TC 3.A.1.17.2) family. As to quaternary structure, the complex is composed of two ATP-binding proteins (SsuB), two transmembrane proteins (SsuC) and a solute-binding protein (SsuA).

The protein localises to the cell inner membrane. It catalyses the reaction ATP + H2O + aliphatic sulfonate-[sulfonate-binding protein]Side 1 = ADP + phosphate + aliphatic sulfonateSide 2 + [sulfonate-binding protein]Side 1.. Functionally, part of the ABC transporter complex SsuABC involved in aliphatic sulfonates import. Responsible for energy coupling to the transport system. This is Aliphatic sulfonates import ATP-binding protein SsuB 1 from Pseudomonas savastanoi pv. phaseolicola (strain 1448A / Race 6) (Pseudomonas syringae pv. phaseolicola (strain 1448A / Race 6)).